The sequence spans 207 residues: Inhibitor of hydrogen peroxide resistance (207 aa).

The segment at residues 163–182 is a DNA-binding region (H-T-H motif); the sequence is MNYIHQRTRISRSVVAEVLA.

The protein belongs to the IprA family.

Functionally, involved in oxidative stress resistance. The chain is Inhibitor of hydrogen peroxide resistance from Escherichia coli O157:H7.